The primary structure comprises 170 residues: Acetyl-CoA decarbonylase/synthase complex subunit epsilon 2 (170 aa).

This sequence belongs to the CdhB family. Heterotetramer of two alpha and two epsilon subunits. The ACDS complex is made up of alpha, epsilon, beta, gamma and delta subunits with a probable stoichiometry of (alpha(2)epsilon(2))(4)-beta(8)-(gamma(1)delta(1))(8).

It functions in the pathway one-carbon metabolism; methanogenesis from acetate. Part of a complex that catalyzes the reversible cleavage of acetyl-CoA, allowing growth on acetate as sole source of carbon and energy. The alpha-epsilon subcomponent functions as a carbon monoxide dehydrogenase. The precise role of the epsilon subunit is unclear; it may have a stabilizing role within the alpha(2)epsilon(2) component and/or be involved in electron transfer to FAD during a potential FAD-mediated CO oxidation. This is Acetyl-CoA decarbonylase/synthase complex subunit epsilon 2 (cdhB2) from Methanosarcina acetivorans (strain ATCC 35395 / DSM 2834 / JCM 12185 / C2A).